A 321-amino-acid chain; its full sequence is Olfactory receptor 3A3 (321 aa).

The Extracellular segment spans residues Met-1 to Pro-34. The N-linked (GlcNAc...) asparagine glycan is linked to Asn-14. A helical membrane pass occupies residues Val-35–Val-58. Topologically, residues Leu-59–Ala-66 are cytoplasmic. The chain crosses the membrane as a helical span at residues Pro-67–Pro-88. The Extracellular segment spans residues Ala-89–Gln-109. An intrachain disulfide couples Cys-106 to Cys-198. The chain crosses the membrane as a helical span at residues Leu-110 to Tyr-129. Over Asp-130 to Val-149 the chain is Cytoplasmic. A helical membrane pass occupies residues Gln-150–Thr-167. At His-168–Glu-205 the chain is on the extracellular side. A helical transmembrane segment spans residues Leu-206–Ala-228. Residues His-229–Lys-245 are Cytoplasmic-facing. The helical transmembrane segment at Ala-246 to Tyr-268 threads the bilayer. Residues Met-269–Lys-281 lie on the Extracellular side of the membrane. The chain crosses the membrane as a helical span at residues Gly-282–Leu-301. Residues Arg-302–Thr-321 lie on the Cytoplasmic side of the membrane.

The protein belongs to the G-protein coupled receptor 1 family.

It is found in the cell membrane. Odorant receptor. The protein is Olfactory receptor 3A3 (OR3A3) of Homo sapiens (Human).